Reading from the N-terminus, the 185-residue chain is Ribosome-recycling factor (185 aa).

Belongs to the RRF family.

Its subcellular location is the cytoplasm. Functionally, responsible for the release of ribosomes from messenger RNA at the termination of protein biosynthesis. May increase the efficiency of translation by recycling ribosomes from one round of translation to another. The chain is Ribosome-recycling factor from Shewanella amazonensis (strain ATCC BAA-1098 / SB2B).